The chain runs to 466 residues: Glutamate--tRNA ligase (466 aa).

Residues 11–21 (PSPTGFIHLGN) carry the 'HIGH' region motif. The 'KMSKS' region signature appears at 243 to 247 (KMSKR). Lys246 contacts ATP.

It belongs to the class-I aminoacyl-tRNA synthetase family. Glutamate--tRNA ligase type 1 subfamily. Monomer.

Its subcellular location is the cytoplasm. The catalysed reaction is tRNA(Glu) + L-glutamate + ATP = L-glutamyl-tRNA(Glu) + AMP + diphosphate. Its function is as follows. Catalyzes the attachment of glutamate to tRNA(Glu) in a two-step reaction: glutamate is first activated by ATP to form Glu-AMP and then transferred to the acceptor end of tRNA(Glu). This Cupriavidus taiwanensis (strain DSM 17343 / BCRC 17206 / CCUG 44338 / CIP 107171 / LMG 19424 / R1) (Ralstonia taiwanensis (strain LMG 19424)) protein is Glutamate--tRNA ligase.